The chain runs to 300 residues: tRNA dimethylallyltransferase (300 aa).

11-18 (GPTAVGKS) contacts ATP. Residue 13-18 (TAVGKS) coordinates substrate. Residues 35–38 (DSIQ) form an interaction with substrate tRNA region.

It belongs to the IPP transferase family. As to quaternary structure, monomer. Mg(2+) is required as a cofactor.

The catalysed reaction is adenosine(37) in tRNA + dimethylallyl diphosphate = N(6)-dimethylallyladenosine(37) in tRNA + diphosphate. Functionally, catalyzes the transfer of a dimethylallyl group onto the adenine at position 37 in tRNAs that read codons beginning with uridine, leading to the formation of N6-(dimethylallyl)adenosine (i(6)A). The chain is tRNA dimethylallyltransferase from Borrelia recurrentis (strain A1).